We begin with the raw amino-acid sequence, 919 residues long: UPF0182 protein SUN_1015 (919 aa).

Helical transmembrane passes span 8-28, 51-71, 102-122, 158-178, 207-227, 246-266, and 274-294; these read IIIT…VDYY, ILSF…HIHF, AVAW…GSYA, VYQF…IGVL, LTAF…YNIL, IPAY…LFFY, and VIVS…WIYP.

Belongs to the UPF0182 family.

It is found in the cell membrane. In Sulfurovum sp. (strain NBC37-1), this protein is UPF0182 protein SUN_1015.